Consider the following 330-residue polypeptide: MAFLEDGNHTTVTEFFLLGLTDDPVLRDILFIIILCIYLVTVSGNLSTILLIRVSSQLHHPMYFILSHLASVDIGISSSVTPNMLATFLVKQNTISYIGCSIQFTSAAFFGTVECFLLATMAYDRFVAICNPLLYSTKMSTEACIQLVVGSYIQGFLNASFFTLSFFSLFFCGPNRINDFYCDFAPLLELSCSDVTVAVVITSISAGFITLTTVFVIAISYSCIFITIMKMHSTESRCKAFSTCTSHLTAVILFYGTAIFIYVMPKSSYSTDQNKVLSIFYTVVIPMLNPLIYSLRNNEIKEALKRHLGKKVFSYGNLFCKTHYNHNYPV.

Over 1–28 (MAFLEDGNHTTVTEFFLLGLTDDPVLRD) the chain is Extracellular. A glycan (N-linked (GlcNAc...) asparagine) is linked at N8. A helical membrane pass occupies residues 29–49 (ILFIIILCIYLVTVSGNLSTI). The Cytoplasmic portion of the chain corresponds to 50–57 (LLIRVSSQ). The chain crosses the membrane as a helical span at residues 58–78 (LHHPMYFILSHLASVDIGISS). At 79 to 102 (SVTPNMLATFLVKQNTISYIGCSI) the chain is on the extracellular side. C100 and C192 form a disulfide bridge. A helical membrane pass occupies residues 103-123 (QFTSAAFFGTVECFLLATMAY). Topologically, residues 124 to 136 (DRFVAICNPLLYS) are cytoplasmic. A helical membrane pass occupies residues 137–157 (TKMSTEACIQLVVGSYIQGFL). Topologically, residues 158–199 (NASFFTLSFFSLFFCGPNRINDFYCDFAPLLELSCSDVTVAV) are extracellular. Residues 200 to 220 (VITSISAGFITLTTVFVIAIS) traverse the membrane as a helical segment. Topologically, residues 221–240 (YSCIFITIMKMHSTESRCKA) are cytoplasmic. The chain crosses the membrane as a helical span at residues 241–261 (FSTCTSHLTAVILFYGTAIFI). The Extracellular portion of the chain corresponds to 262 to 274 (YVMPKSSYSTDQN). Residues 275-295 (KVLSIFYTVVIPMLNPLIYSL) traverse the membrane as a helical segment. Residues 296–330 (RNNEIKEALKRHLGKKVFSYGNLFCKTHYNHNYPV) lie on the Cytoplasmic side of the membrane.

This sequence belongs to the G-protein coupled receptor 1 family.

The protein localises to the cell membrane. In terms of biological role, potential odorant receptor. In Mus musculus (Mouse), this protein is Olfactory receptor 5P73.